The primary structure comprises 231 residues: UPF0758 protein aq_1610 (231 aa).

The MPN domain occupies 110–231; that stretch reads SIRNPQEAFE…YFSFREEGVL (122 aa). Positions 180, 182, and 193 each coordinate Zn(2+). A JAMM motif motif is present at residues 180–193; the sequence is HNHPQGEPSPSNED.

Belongs to the UPF0758 family.

The sequence is that of UPF0758 protein aq_1610 from Aquifex aeolicus (strain VF5).